The following is a 227-amino-acid chain: Flagellar L-ring protein (227 aa).

Residues 1-16 (MRNIILFAAGTLLLSG) form the signal peptide. Residue Cys-17 is the site of N-palmitoyl cysteine attachment. Cys-17 is lipidated: S-diacylglycerol cysteine.

Belongs to the FlgH family. The basal body constitutes a major portion of the flagellar organelle and consists of four rings (L,P,S, and M) mounted on a central rod.

The protein localises to the cell outer membrane. It is found in the bacterial flagellum basal body. Functionally, assembles around the rod to form the L-ring and probably protects the motor/basal body from shearing forces during rotation. This Pseudoalteromonas translucida (strain TAC 125) protein is Flagellar L-ring protein.